Consider the following 246-residue polypeptide: tRNA (guanine-N(1)-)-methyltransferase (246 aa).

S-adenosyl-L-methionine contacts are provided by residues Gly114 and 134 to 139 (IGDYIL). A compositionally biased stretch (basic and acidic residues) spans 219–231 (LRRPDLWERHEGA). A disordered region spans residues 219 to 246 (LRRPDLWERHEGARAQSPSGARRQKKER).

The protein belongs to the RNA methyltransferase TrmD family. Homodimer.

The protein localises to the cytoplasm. The catalysed reaction is guanosine(37) in tRNA + S-adenosyl-L-methionine = N(1)-methylguanosine(37) in tRNA + S-adenosyl-L-homocysteine + H(+). Specifically methylates guanosine-37 in various tRNAs. This Rhizorhabdus wittichii (strain DSM 6014 / CCUG 31198 / JCM 15750 / NBRC 105917 / EY 4224 / RW1) (Sphingomonas wittichii) protein is tRNA (guanine-N(1)-)-methyltransferase.